The primary structure comprises 88 residues: DNA-directed RNA polymerase subunit omega (88 aa).

It belongs to the RNA polymerase subunit omega family. As to quaternary structure, the RNAP catalytic core consists of 2 alpha, 1 beta, 1 beta' and 1 omega subunit. When a sigma factor is associated with the core the holoenzyme is formed, which can initiate transcription.

The catalysed reaction is RNA(n) + a ribonucleoside 5'-triphosphate = RNA(n+1) + diphosphate. Functionally, promotes RNA polymerase assembly. Latches the N- and C-terminal regions of the beta' subunit thereby facilitating its interaction with the beta and alpha subunits. The sequence is that of DNA-directed RNA polymerase subunit omega from Salinispora arenicola (strain CNS-205).